Consider the following 1169-residue polypeptide: ATP-dependent helicase/deoxyribonuclease subunit B (1169 aa).

Positions 1 to 285 (MEIQFLAGRS…TIFERNHRHL (285 aa)) constitute a UvrD-like helicase ATP-binding domain. ATP is bound at residue 8 to 15 (GRSGSGKT). One can recognise a UvrD-like helicase C-terminal domain in the interval 280-586 (RNHRHLYTPD…KFALIPPSLD (307 aa)). Positions 801, 1121, 1124, and 1130 each coordinate [4Fe-4S] cluster.

This sequence belongs to the helicase family. AddB/RexB type 1 subfamily. As to quaternary structure, heterodimer of AddA and AddB. Mg(2+) serves as cofactor. It depends on [4Fe-4S] cluster as a cofactor.

Its function is as follows. The heterodimer acts as both an ATP-dependent DNA helicase and an ATP-dependent, dual-direction single-stranded exonuclease. Recognizes the chi site generating a DNA molecule suitable for the initiation of homologous recombination. The AddB subunit has 5' -&gt; 3' nuclease activity but not helicase activity. In Bacillus pumilus (strain SAFR-032), this protein is ATP-dependent helicase/deoxyribonuclease subunit B.